Consider the following 421-residue polypeptide: Enolase 1 (421 aa).

Residue Q164 participates in (2R)-2-phosphoglycerate binding. E206 (proton donor) is an active-site residue. Mg(2+) is bound by residues D243, E287, and D314. Residues K339, R368, S369, and K390 each contribute to the (2R)-2-phosphoglycerate site. The Proton acceptor role is filled by K339.

This sequence belongs to the enolase family. In terms of assembly, component of the RNA degradosome, a multiprotein complex involved in RNA processing and mRNA degradation. Mg(2+) serves as cofactor.

The protein resides in the cytoplasm. It is found in the secreted. Its subcellular location is the cell surface. It carries out the reaction (2R)-2-phosphoglycerate = phosphoenolpyruvate + H2O. The protein operates within carbohydrate degradation; glycolysis; pyruvate from D-glyceraldehyde 3-phosphate: step 4/5. In terms of biological role, catalyzes the reversible conversion of 2-phosphoglycerate (2-PG) into phosphoenolpyruvate (PEP). It is essential for the degradation of carbohydrates via glycolysis. The sequence is that of Enolase 1 from Methylococcus capsulatus (strain ATCC 33009 / NCIMB 11132 / Bath).